Reading from the N-terminus, the 396-residue chain is Elongation factor Tu 2 (396 aa).

The tr-type G domain occupies 10–206 (KPHVNVGTIG…ALDSYIPLPE (197 aa)). The G1 stretch occupies residues 19–26 (GHVDHGKT). 19–26 (GHVDHGKT) is a GTP binding site. T26 serves as a coordination point for Mg(2+). The interval 60–64 (GITIN) is G2. The segment at 81 to 84 (DCPG) is G3. GTP is bound by residues 81 to 85 (DCPGH) and 136 to 139 (NKCD). The segment at 136–139 (NKCD) is G4. The G5 stretch occupies residues 174-176 (SAK).

It belongs to the TRAFAC class translation factor GTPase superfamily. Classic translation factor GTPase family. EF-Tu/EF-1A subfamily. Monomer.

It is found in the cytoplasm. It carries out the reaction GTP + H2O = GDP + phosphate + H(+). In terms of biological role, GTP hydrolase that promotes the GTP-dependent binding of aminoacyl-tRNA to the A-site of ribosomes during protein biosynthesis. The polypeptide is Elongation factor Tu 2 (Albidiferax ferrireducens (strain ATCC BAA-621 / DSM 15236 / T118) (Rhodoferax ferrireducens)).